Reading from the N-terminus, the 330-residue chain is Agamous-like MADS-box protein AGL75 (330 aa).

The 43-residue stretch at Thr19–Lys61 folds into the MADS-box domain.

In terms of assembly, interacts with MEE14/CBP1.

The protein localises to the nucleus. In terms of biological role, probable transcription factor that may function in the maintenance of the proper function of the central cell in pollen tube attraction. This Arabidopsis thaliana (Mouse-ear cress) protein is Agamous-like MADS-box protein AGL75.